We begin with the raw amino-acid sequence, 568 residues long: MEAPVELGPGGRQASPERRHWLRCLVLSDFREELRALLVLACPAFLAQLMVFLISFVSSVFCGHLSKLELNAVTLAIAVINVMGVSVGFGLSSACDTLISQTYGSRNLKHVGVILQRGSLILLLCCLPCWALFLNTQHILLLFRQDPAVSRLTQTYVTIFIPALPATFLYTLQVKYLLNQGIVLPQVVTGVAANLVNALANYLFVYQLHLGVMGSALANTVAQFTLALLLFLYILRSKVYQATWGGWSLECLQDWASFFRLAIPSMLMLCMEWWAYEIGSFLSGILGMVELGAQSVTYELAVIVYMIPMGLSVAVNVRVGNALGAGNIEQAKKSSAVALLVTELIAVVFCVMLLSCKDLVGYIFTSDRDIIALVAQVTPIYAVSHLFESLAGTSGGILRGSGNQKFGAIVNAIGYYVVGLPIGIALMFAAKLGVIGLWLGIVVCAVSQAVCFLGFIARLNWTKACQQARVHANLTVNTASNGNSAVLPDQPHPVGPDSHGGIVLRDADRKEGAELNEQVHPELPLPVRPEDSAHLSGKQLALRRGLLLLGVILVLLAGILVKVYVRTQ.

Met-1 carries the N-acetylmethionine modification. Over 1-36 (MEAPVELGPGGRQASPERRHWLRCLVLSDFREELRA) the chain is Cytoplasmic. The chain crosses the membrane as a helical span at residues 37–57 (LLVLACPAFLAQLMVFLISFV). Residues 58 to 71 (SSVFCGHLSKLELN) are Extracellular-facing. Residues 72-92 (AVTLAIAVINVMGVSVGFGLS) form a helical membrane-spanning segment. At 93–119 (SACDTLISQTYGSRNLKHVGVILQRGS) the chain is on the cytoplasmic side. Residues 120–140 (LILLLCCLPCWALFLNTQHIL) traverse the membrane as a helical segment. The Extracellular portion of the chain corresponds to 141-151 (LLFRQDPAVSR). A helical transmembrane segment spans residues 152–172 (LTQTYVTIFIPALPATFLYTL). Over 173-175 (QVK) the chain is Cytoplasmic. A helical membrane pass occupies residues 176–196 (YLLNQGIVLPQVVTGVAANLV). The Extracellular segment spans residues 197 to 214 (NALANYLFVYQLHLGVMG). The helical transmembrane segment at 215-235 (SALANTVAQFTLALLLFLYIL) threads the bilayer. At 236–255 (RSKVYQATWGGWSLECLQDW) the chain is on the cytoplasmic side. The helical transmembrane segment at 256-278 (ASFFRLAIPSMLMLCMEWWAYEI) threads the bilayer. At 279 to 294 (GSFLSGILGMVELGAQ) the chain is on the extracellular side. The helical transmembrane segment at 295 to 315 (SVTYELAVIVYMIPMGLSVAV) threads the bilayer. The Cytoplasmic portion of the chain corresponds to 316–335 (NVRVGNALGAGNIEQAKKSS). The chain crosses the membrane as a helical span at residues 336-356 (AVALLVTELIAVVFCVMLLSC). Residues 357 to 369 (KDLVGYIFTSDRD) lie on the Extracellular side of the membrane. Residues 370–390 (IIALVAQVTPIYAVSHLFESL) traverse the membrane as a helical segment. At 391 to 407 (AGTSGGILRGSGNQKFG) the chain is on the cytoplasmic side. Residues 408–430 (AIVNAIGYYVVGLPIGIALMFAA) traverse the membrane as a helical segment. Residues 431–433 (KLG) are Extracellular-facing. The chain crosses the membrane as a helical span at residues 434–456 (VIGLWLGIVVCAVSQAVCFLGFI). Residues 457 to 544 (ARLNWTKACQ…LSGKQLALRR (88 aa)) are Cytoplasmic-facing. The chain crosses the membrane as a helical span at residues 545-565 (GLLLLGVILVLLAGILVKVYV). Over 566-568 (RTQ) the chain is Extracellular.

Belongs to the multi antimicrobial extrusion (MATE) (TC 2.A.66.1) family. Predominantly expressed in kidney and liver.

It localises to the cell membrane. The protein localises to the apical cell membrane. The catalysed reaction is thiamine(out) + H(+)(in) = thiamine(in) + H(+)(out). It carries out the reaction estrone 3-sulfate(in) + H(+)(out) = estrone 3-sulfate(out) + H(+)(in). The enzyme catalyses creatinine(in) + H(+)(out) = creatinine(out) + H(+)(in). It catalyses the reaction agmatine(in) + H(+)(out) = agmatine(out) + H(+)(in). Multidrug efflux pump that functions as a H(+)/organic cation antiporter. Plays a physiological role in the excretion of cationic compounds including endogenous metabolites, drugs, toxins through the kidney and liver, into urine and bile respectively. Mediates the efflux of endogenous compounds such as creatinine, vitamin B1/thiamine, agmatine and estrone-3-sulfate. May also contribute to regulate the transport of cationic compounds in testis across the blood-testis-barrier. The chain is Multidrug and toxin extrusion protein 1 (SLC47A1) from Oryctolagus cuniculus (Rabbit).